A 254-amino-acid chain; its full sequence is uncharacterized protein (254 aa).

Belongs to the MtxX family.

This is an uncharacterized protein from Methanopyrus kandleri (strain AV19 / DSM 6324 / JCM 9639 / NBRC 100938).